Consider the following 688-residue polypeptide: Glycine--tRNA ligase beta subunit (688 aa).

It belongs to the class-II aminoacyl-tRNA synthetase family. As to quaternary structure, tetramer of two alpha and two beta subunits.

Its subcellular location is the cytoplasm. It carries out the reaction tRNA(Gly) + glycine + ATP = glycyl-tRNA(Gly) + AMP + diphosphate. This is Glycine--tRNA ligase beta subunit from Vibrio parahaemolyticus serotype O3:K6 (strain RIMD 2210633).